The chain runs to 748 residues: Catalase-peroxidase (748 aa).

Positions 91 to 236 (WHSAGTYRVG…LAAVQMGLIY (146 aa)) form a cross-link, tryptophyl-tyrosyl-methioninium (Trp-Tyr) (with M-262). Catalysis depends on His92, which acts as the Proton acceptor. The interval 201-223 (AQPVADKAGHGKEHGRTDGGRNL) is disordered. Residues 207–221 (KAGHGKEHGRTDGGR) are compositionally biased toward basic and acidic residues. Positions 236 to 262 (YVNPEGPDGNPDPQASAHDIRETFARM) form a cross-link, tryptophyl-tyrosyl-methioninium (Tyr-Met) (with W-91). Residue His277 participates in heme b binding.

It belongs to the peroxidase family. Peroxidase/catalase subfamily. Homodimer or homotetramer. Heme b is required as a cofactor. In terms of processing, formation of the three residue Trp-Tyr-Met cross-link is important for the catalase, but not the peroxidase activity of the enzyme.

It catalyses the reaction H2O2 + AH2 = A + 2 H2O. The catalysed reaction is 2 H2O2 = O2 + 2 H2O. In terms of biological role, bifunctional enzyme with both catalase and broad-spectrum peroxidase activity. The sequence is that of Catalase-peroxidase from Bordetella avium (strain 197N).